The sequence spans 391 residues: Formate-dependent phosphoribosylglycinamide formyltransferase (391 aa).

Residues Glu-18–Leu-19 and Glu-78 each bind N(1)-(5-phospho-beta-D-ribosyl)glycinamide. Residues Arg-110, Lys-151, Ser-156–Gln-161, Glu-191–Ile-194, and Glu-199 each bind ATP. Residues Glu-115–Leu-305 enclose the ATP-grasp domain. 2 residues coordinate Mg(2+): Glu-264 and Glu-276. Residues Asp-283, Lys-353, and Arg-360–Arg-361 each bind N(1)-(5-phospho-beta-D-ribosyl)glycinamide.

This sequence belongs to the PurK/PurT family. In terms of assembly, homodimer.

It carries out the reaction N(1)-(5-phospho-beta-D-ribosyl)glycinamide + formate + ATP = N(2)-formyl-N(1)-(5-phospho-beta-D-ribosyl)glycinamide + ADP + phosphate + H(+). The protein operates within purine metabolism; IMP biosynthesis via de novo pathway; N(2)-formyl-N(1)-(5-phospho-D-ribosyl)glycinamide from N(1)-(5-phospho-D-ribosyl)glycinamide (formate route): step 1/1. Involved in the de novo purine biosynthesis. Catalyzes the transfer of formate to 5-phospho-ribosyl-glycinamide (GAR), producing 5-phospho-ribosyl-N-formylglycinamide (FGAR). Formate is provided by PurU via hydrolysis of 10-formyl-tetrahydrofolate. This chain is Formate-dependent phosphoribosylglycinamide formyltransferase, found in Nostoc sp. (strain PCC 7120 / SAG 25.82 / UTEX 2576).